Reading from the N-terminus, the 760-residue chain is Phosphoribosylformylglycinamidine synthase subunit PurL (760 aa).

The segment at 1-25 (MNMSLPADRDTAKKPSAQKPSAHAQ) is disordered. Residue His69 is part of the active site. 2 residues coordinate ATP: Tyr72 and Lys115. Glu117 is a Mg(2+) binding site. Substrate-binding positions include 118–121 (SHNH) and Arg140. His119 functions as the Proton acceptor in the catalytic mechanism. Position 141 (Asp141) interacts with Mg(2+). Residue Gln265 participates in substrate binding. Asp293 is a binding site for Mg(2+). Residue 337–339 (ESQ) coordinates substrate. Positions 519 and 556 each coordinate ATP. Asn557 lines the Mg(2+) pocket. Ser559 contacts substrate.

The protein belongs to the FGAMS family. Monomer. Part of the FGAM synthase complex composed of 1 PurL, 1 PurQ and 2 PurS subunits.

It localises to the cytoplasm. The enzyme catalyses N(2)-formyl-N(1)-(5-phospho-beta-D-ribosyl)glycinamide + L-glutamine + ATP + H2O = 2-formamido-N(1)-(5-O-phospho-beta-D-ribosyl)acetamidine + L-glutamate + ADP + phosphate + H(+). It participates in purine metabolism; IMP biosynthesis via de novo pathway; 5-amino-1-(5-phospho-D-ribosyl)imidazole from N(2)-formyl-N(1)-(5-phospho-D-ribosyl)glycinamide: step 1/2. In terms of biological role, part of the phosphoribosylformylglycinamidine synthase complex involved in the purines biosynthetic pathway. Catalyzes the ATP-dependent conversion of formylglycinamide ribonucleotide (FGAR) and glutamine to yield formylglycinamidine ribonucleotide (FGAM) and glutamate. The FGAM synthase complex is composed of three subunits. PurQ produces an ammonia molecule by converting glutamine to glutamate. PurL transfers the ammonia molecule to FGAR to form FGAM in an ATP-dependent manner. PurS interacts with PurQ and PurL and is thought to assist in the transfer of the ammonia molecule from PurQ to PurL. The polypeptide is Phosphoribosylformylglycinamidine synthase subunit PurL (Tropheryma whipplei (strain TW08/27) (Whipple's bacillus)).